The following is a 131-amino-acid chain: Profilin-2 (131 aa).

An intrachain disulfide couples C13 to C115. The Involved in PIP2 interaction motif lies at A81 to T97. At T111 the chain carries Phosphothreonine.

The protein belongs to the profilin family. Occurs in many kinds of cells as a complex with monomeric actin in a 1:1 ratio. In terms of processing, phosphorylated by MAP kinases. As to expression, pollen specific.

Its subcellular location is the cytoplasm. It localises to the cytoskeleton. In terms of biological role, binds to actin and affects the structure of the cytoskeleton. At high concentrations, profilin prevents the polymerization of actin, whereas it enhances it at low concentrations. By binding to PIP2, it inhibits the formation of IP3 and DG. The polypeptide is Profilin-2 (PRO2) (Zea mays (Maize)).